Here is a 133-residue protein sequence, read N- to C-terminus: Arginine decarboxylase proenzyme (133 aa).

Ser-81 serves as the catalytic Schiff-base intermediate with substrate; via pyruvic acid. A Pyruvic acid (Ser); by autocatalysis modification is found at Ser-81. His-86 (proton acceptor; for processing activity) is an active-site residue. Cys-101 acts as the Proton donor; for catalytic activity in catalysis.

The protein belongs to the prokaryotic AdoMetDC family. Type 1 subfamily. As to quaternary structure, heterooctamer of four alpha and four beta chains arranged as a tetramer of alpha/beta heterodimers. The cofactor is pyruvate. Is synthesized initially as an inactive proenzyme. Formation of the active enzyme involves a self-maturation process in which the active site pyruvoyl group is generated from an internal serine residue via an autocatalytic post-translational modification. Two non-identical subunits are generated from the proenzyme in this reaction, and the pyruvate is formed at the N-terminus of the alpha chain, which is derived from the carboxyl end of the proenzyme. The post-translation cleavage follows an unusual pathway, termed non-hydrolytic serinolysis, in which the side chain hydroxyl group of the serine supplies its oxygen atom to form the C-terminus of the beta chain, while the remainder of the serine residue undergoes an oxidative deamination to produce ammonia and the pyruvoyl group blocking the N-terminus of the alpha chain.

It carries out the reaction L-arginine + H(+) = agmatine + CO2. It participates in amine and polyamine biosynthesis; agmatine biosynthesis; agmatine from L-arginine: step 1/1. In terms of biological role, specifically catalyzes the decarboxylation of L-arginine to agmatine. Has no S-adenosylmethionine decarboxylase (AdoMetDC) activity. In Pyrobaculum arsenaticum (strain DSM 13514 / JCM 11321 / PZ6), this protein is Arginine decarboxylase proenzyme.